The sequence spans 197 residues: Probable molybdenum cofactor guanylyltransferase (197 aa).

Residues 12-14 (LAG), Lys-24, Asp-71, and Asp-103 contribute to the GTP site. Asp-103 is a Mg(2+) binding site.

This sequence belongs to the MobA family. Mg(2+) serves as cofactor.

It localises to the cytoplasm. It carries out the reaction Mo-molybdopterin + GTP + H(+) = Mo-molybdopterin guanine dinucleotide + diphosphate. Transfers a GMP moiety from GTP to Mo-molybdopterin (Mo-MPT) cofactor (Moco or molybdenum cofactor) to form Mo-molybdopterin guanine dinucleotide (Mo-MGD) cofactor. The chain is Probable molybdenum cofactor guanylyltransferase from Mycolicibacterium paratuberculosis (strain ATCC BAA-968 / K-10) (Mycobacterium paratuberculosis).